Reading from the N-terminus, the 359-residue chain is Protein trichome birefringence-like 42 (359 aa).

Residues 7 to 25 (LFLLLLIFLVDLSDYGVLA) traverse the membrane as a helical; Signal-anchor for type II membrane protein segment. The GDS motif motif lies at 110–112 (GDS). A DCXHWCLPGXXDXWN motif motif is present at residues 335–349 (DCSHWCLPGVPDAWN).

This sequence belongs to the PC-esterase family. TBL subfamily.

Its subcellular location is the membrane. Its function is as follows. May act as a bridging protein that binds pectin and other cell wall polysaccharides. Probably involved in maintaining esterification of pectins. May be involved in the specific O-acetylation of cell wall polymers. The protein is Protein trichome birefringence-like 42 (TBL42) of Arabidopsis thaliana (Mouse-ear cress).